The sequence spans 198 residues: Dual specificity protein phosphatase 14 (198 aa).

The Tyrosine-protein phosphatase domain maps to 26–167; that stretch reads GIAQITSSLF…LIDYERQLFG (142 aa). Residue cysteine 111 is the Phosphocysteine intermediate of the active site.

The protein belongs to the protein-tyrosine phosphatase family. Non-receptor class dual specificity subfamily. Interacts with CD28.

The catalysed reaction is O-phospho-L-tyrosyl-[protein] + H2O = L-tyrosyl-[protein] + phosphate. The enzyme catalyses O-phospho-L-seryl-[protein] + H2O = L-seryl-[protein] + phosphate. It catalyses the reaction O-phospho-L-threonyl-[protein] + H2O = L-threonyl-[protein] + phosphate. Its function is as follows. Involved in the inactivation of MAP kinases. Dephosphorylates ERK, JNK and p38 MAP-kinases. Plays a negative role in TCR signaling by dephosphorylating MAP3K7 adapter TAB1 leading to its inactivation. The sequence is that of Dual specificity protein phosphatase 14 (DUSP14) from Homo sapiens (Human).